A 325-amino-acid chain; its full sequence is Tetraacyldisaccharide 4'-kinase (325 aa).

An ATP-binding site is contributed by T55–T62.

Belongs to the LpxK family.

The enzyme catalyses a lipid A disaccharide + ATP = a lipid IVA + ADP + H(+). It participates in glycolipid biosynthesis; lipid IV(A) biosynthesis; lipid IV(A) from (3R)-3-hydroxytetradecanoyl-[acyl-carrier-protein] and UDP-N-acetyl-alpha-D-glucosamine: step 6/6. Functionally, transfers the gamma-phosphate of ATP to the 4'-position of a tetraacyldisaccharide 1-phosphate intermediate (termed DS-1-P) to form tetraacyldisaccharide 1,4'-bis-phosphate (lipid IVA). In Salmonella typhi, this protein is Tetraacyldisaccharide 4'-kinase.